The primary structure comprises 578 residues: MVTLIDSPTSAAVQPRLTLQTADIAAHTTAIRCLDWDRDRFDIEFELRHGTTYNSFLIRGEKTALIDTSHRKFEAVYLQLLQDLVDLRSLDYLIVNHTEPDHSGLIPDLLELAPQVTVVGSKVAIQFLEKLVHRPFESQIVKSGHSLDLGQGHELQFISAPNLHWPDTILTYDSGTQVLYTCDVFGMHYCDDSLFDETPERLEPDFQYYYNCLMGSNARSVLMALKRIAPLQVVLVATGHGPLLQHHISHWLGQYDAWSQNQVKAETFVALFYVDGYGVSDRLVQTIADGISKTGVAIELVDLSVADTHEVRTLAQCAAGLVVGMPPQSSTSTTLDPLLGTILAAVHPKQVIGLFESGGGQDEPIYPLRNRFQELGLQEAFEPILLKTEPTAATDQLCREAGTDLGQYLTQKQSQQANTDLDPELNQAIGRLSTGLYILTAQKGDVRSAMLASWVIQGSFEPLGIVIAVAKDRAIESLLHPGDTFVLNVLEEDNYQSLMRHFLLRFPPGADRFAGVNTYPAQNGSPILLETLAYLECEVTSRLDGNDHWLVYSTIQTGRVAKLNALTATHHRKLGNHY.

The tract at residues 48–240 is zinc metallo-hydrolase; it reads RHGTTYNSFL…LQVVLVATGH (193 aa). Fe cation contacts are provided by His97, Glu99, Asp101, His164, Asp183, and His240. Positions 269 to 406 constitute a Flavodoxin-like domain; the sequence is VALFYVDGYG…LCREAGTDLG (138 aa). The interval 429-578 is flavodoxin-reductase-like; it reads IGRLSTGLYI…THHRKLGNHY (150 aa).

It in the N-terminal section; belongs to the zinc metallo-hydrolase group 3 family. This sequence in the C-terminal section; belongs to the flavodoxin reductase family. Fe cation serves as cofactor.

Functionally, mediates electron transfer from NADH to oxygen, reducing it to water. This modular protein has 3 redox cofactors, in other organisms the same activity requires 2 or 3 proteins. In Synechocystis sp. (strain ATCC 27184 / PCC 6803 / Kazusa), this protein is Putative diflavin flavoprotein A 2 (dfa2).